The following is a 186-amino-acid chain: Peptide deformylase (186 aa).

Fe cation contacts are provided by cysteine 113 and histidine 157. The active site involves glutamate 158. Histidine 161 contributes to the Fe cation binding site.

The protein belongs to the polypeptide deformylase family. The cofactor is Fe(2+).

The enzyme catalyses N-terminal N-formyl-L-methionyl-[peptide] + H2O = N-terminal L-methionyl-[peptide] + formate. Functionally, removes the formyl group from the N-terminal Met of newly synthesized proteins. Requires at least a dipeptide for an efficient rate of reaction. N-terminal L-methionine is a prerequisite for activity but the enzyme has broad specificity at other positions. The polypeptide is Peptide deformylase (Malacoplasma penetrans (strain HF-2) (Mycoplasma penetrans)).